The following is a 164-amino-acid chain: Cytochrome c oxidase subunit 4, mitochondrial (164 aa).

Residues 1-33 (MFMNSMLRVSRQRAAVRSTVSLYRGFVSASIRR) constitute a mitochondrion transit peptide. Cys-120, His-128, Cys-143, and Cys-146 together coordinate Zn(2+).

It belongs to the cytochrome c oxidase subunit 5B family. As to quaternary structure, component of the cytochrome c oxidase (complex IV, CIV), a multisubunit enzyme composed of a catalytic core of 3 subunits and several supernumerary subunits. The complex exists as a monomer or a dimer and forms supercomplexes (SCs) in the inner mitochondrial membrane with ubiquinol-cytochrome c oxidoreductase (cytochrome b-c1 complex, complex III, CIII).

It is found in the mitochondrion inner membrane. The protein operates within energy metabolism; oxidative phosphorylation. Component of the cytochrome c oxidase, the last enzyme in the mitochondrial electron transport chain which drives oxidative phosphorylation. The respiratory chain contains 3 multisubunit complexes succinate dehydrogenase (complex II, CII), ubiquinol-cytochrome c oxidoreductase (cytochrome b-c1 complex, complex III, CIII) and cytochrome c oxidase (complex IV, CIV), that cooperate to transfer electrons derived from NADH and succinate to molecular oxygen, creating an electrochemical gradient over the inner membrane that drives transmembrane transport and the ATP synthase. Cytochrome c oxidase is the component of the respiratory chain that catalyzes the reduction of oxygen to water. Electrons originating from reduced cytochrome c in the intermembrane space (IMS) are transferred via the dinuclear copper A center (CU(A)) of subunit 2 and heme A of subunit 1 to the active site in subunit 1, a binuclear center (BNC) formed by heme A3 and copper B (CU(B)). The BNC reduces molecular oxygen to 2 water molecules using 4 electrons from cytochrome c in the IMS and 4 protons from the mitochondrial matrix. This Schizosaccharomyces pombe (strain 972 / ATCC 24843) (Fission yeast) protein is Cytochrome c oxidase subunit 4, mitochondrial (cox4).